A 305-amino-acid polypeptide reads, in one-letter code: Plant-type L-asparaginase (305 aa).

The active-site Nucleophile is T175. Residues 202 to 205 (RVGD) and 224 to 227 (TGLG) each bind substrate.

The protein belongs to the Ntn-hydrolase family. In terms of assembly, heterotetramer of two alpha and two beta chains arranged as a dimer of alpha/beta heterodimers. In terms of processing, autocleaved. Generates the alpha and beta subunits. The N-terminal residue of the beta subunit is thought to be responsible for the nucleophile hydrolase activity.

It carries out the reaction L-asparagine + H2O = L-aspartate + NH4(+). Catalyzes the hydrolysis of L-asparagine into L-aspartate and ammonia. This Pyrococcus horikoshii (strain ATCC 700860 / DSM 12428 / JCM 9974 / NBRC 100139 / OT-3) protein is Plant-type L-asparaginase.